A 337-amino-acid polypeptide reads, in one-letter code: Holliday junction branch migration complex subunit RuvB (337 aa).

The large ATPase domain (RuvB-L) stretch occupies residues 1–182 (MEDRMVSASY…FGVLSAMEFY (182 aa)). ATP-binding residues include L21, R22, G63, K66, T67, T68, R172, Y182, and R219. T67 serves as a coordination point for Mg(2+). The small ATPAse domain (RuvB-S) stretch occupies residues 183–253 (NEDELKEIIL…IAKNALSLLE (71 aa)). Residues 256-337 (GEGFDKIDNK…REFKEQTKLT (82 aa)) are head domain (RuvB-H). The DNA site is built by R311 and R316.

The protein belongs to the RuvB family. As to quaternary structure, homohexamer. Forms an RuvA(8)-RuvB(12)-Holliday junction (HJ) complex. HJ DNA is sandwiched between 2 RuvA tetramers; dsDNA enters through RuvA and exits via RuvB. An RuvB hexamer assembles on each DNA strand where it exits the tetramer. Each RuvB hexamer is contacted by two RuvA subunits (via domain III) on 2 adjacent RuvB subunits; this complex drives branch migration. In the full resolvosome a probable DNA-RuvA(4)-RuvB(12)-RuvC(2) complex forms which resolves the HJ.

The protein resides in the cytoplasm. The enzyme catalyses ATP + H2O = ADP + phosphate + H(+). The RuvA-RuvB-RuvC complex processes Holliday junction (HJ) DNA during genetic recombination and DNA repair, while the RuvA-RuvB complex plays an important role in the rescue of blocked DNA replication forks via replication fork reversal (RFR). RuvA specifically binds to HJ cruciform DNA, conferring on it an open structure. The RuvB hexamer acts as an ATP-dependent pump, pulling dsDNA into and through the RuvAB complex. RuvB forms 2 homohexamers on either side of HJ DNA bound by 1 or 2 RuvA tetramers; 4 subunits per hexamer contact DNA at a time. Coordinated motions by a converter formed by DNA-disengaged RuvB subunits stimulates ATP hydrolysis and nucleotide exchange. Immobilization of the converter enables RuvB to convert the ATP-contained energy into a lever motion, pulling 2 nucleotides of DNA out of the RuvA tetramer per ATP hydrolyzed, thus driving DNA branch migration. The RuvB motors rotate together with the DNA substrate, which together with the progressing nucleotide cycle form the mechanistic basis for DNA recombination by continuous HJ branch migration. Branch migration allows RuvC to scan DNA until it finds its consensus sequence, where it cleaves and resolves cruciform DNA. This chain is Holliday junction branch migration complex subunit RuvB, found in Clostridium novyi (strain NT).